We begin with the raw amino-acid sequence, 103 residues long: MERIRDLSSKKAAVIFTKSSCCMCHSIKTLFYELGASPAIHELDKDPEGREMERALRALGSSNPAVPAVFVGGRYIGSAKDIISFHVDGSLKQMLKDAKAIWL.

A Glutaredoxin domain is found at 1-102; it reads MERIRDLSSK…QMLKDAKAIW (102 aa). Cysteine 21 and cysteine 24 are disulfide-bonded.

The protein belongs to the glutaredoxin family. CC-type subfamily.

Its subcellular location is the cytoplasm. Has a glutathione-disulfide oxidoreductase activity in the presence of NADPH and glutathione reductase. Reduces low molecular weight disulfides and proteins. This Arabidopsis thaliana (Mouse-ear cress) protein is Glutaredoxin-C11 (GRXC11).